We begin with the raw amino-acid sequence, 170 residues long: Arginine repressor (170 aa).

This sequence belongs to the ArgR family.

The protein resides in the cytoplasm. It functions in the pathway amino-acid biosynthesis; L-arginine biosynthesis [regulation]. Regulates arginine biosynthesis genes. The protein is Arginine repressor of Mycobacterium tuberculosis (strain ATCC 25177 / H37Ra).